Here is a 91-residue protein sequence, read N- to C-terminus: Putative defective replication initiation protein (91 aa).

This Escherichia coli (strain K12) protein is Putative defective replication initiation protein (repA1).